The sequence spans 491 residues: Aspartyl/glutamyl-tRNA(Asn/Gln) amidotransferase subunit B (491 aa).

Belongs to the GatB/GatE family. GatB subfamily. In terms of assembly, heterotrimer of A, B and C subunits.

It carries out the reaction L-glutamyl-tRNA(Gln) + L-glutamine + ATP + H2O = L-glutaminyl-tRNA(Gln) + L-glutamate + ADP + phosphate + H(+). It catalyses the reaction L-aspartyl-tRNA(Asn) + L-glutamine + ATP + H2O = L-asparaginyl-tRNA(Asn) + L-glutamate + ADP + phosphate + 2 H(+). Functionally, allows the formation of correctly charged Asn-tRNA(Asn) or Gln-tRNA(Gln) through the transamidation of misacylated Asp-tRNA(Asn) or Glu-tRNA(Gln) in organisms which lack either or both of asparaginyl-tRNA or glutaminyl-tRNA synthetases. The reaction takes place in the presence of glutamine and ATP through an activated phospho-Asp-tRNA(Asn) or phospho-Glu-tRNA(Gln). The protein is Aspartyl/glutamyl-tRNA(Asn/Gln) amidotransferase subunit B of Nostoc punctiforme (strain ATCC 29133 / PCC 73102).